The chain runs to 615 residues: MKQLGEEHPLISTKRPRAKKRRSIAICAAVLTLIAFGFIRFVPKDILAGGWYEGEKDGLSALDNEEVRDMQTDGTTFELKHIFHRGTGSHNYMVHRRLDVTKEYLEAHSEELEELTTMQTSEVDESNLQDVYDAYDWPQAHTGKNPWTIKLQIRQSPTNGVVKRLKERHTPNFLDSYLAYALSVKGNPALLNKIELEWEDEHEIPIPDVKDRDTVVSLATISSNAYVKFPKDDKEKKRSDWIDVGDPWVPDENHTDINFGWADDGLRGHVFVSTDNKTVVIGIKGTSGAGLIGTGPEETTANDKLNDNLLFSCCCARVGYMWTTVCDCYQKAYTCDQDCLEKELMRQDRYYQATLDLYRNVSQLYDPSTTNIWVTGHSLGGALASLVGRTYGLPAVAFEAPGEMLATRRLHLPQPPGLPKHLENIWHFGNTADPIYMGVCNGVSSSCNVAGYAMETACHTAHQCVYDVVTDMGWRVNLLNHRIHTVIDDIILAYNDTPPCVQQPPCRDCFNWRFTSSDDNKNDEPPLPNPLHPKPPSTVRSSNMPHEQSPNASRSLSSLCTEPSCTSSFQSVSPSFSSQLPSHPSQNPQRCLRRTWYGRCSKWGHNSAAHHVSSI.

Residues 1–22 are Cytoplasmic-facing; it reads MKQLGEEHPLISTKRPRAKKRR. Residues 23 to 43 form a helical; Signal-anchor for type II membrane protein membrane-spanning segment; sequence SIAICAAVLTLIAFGFIRFVP. At 44-615 the chain is on the lumenal side; it reads KDILAGGWYE…NSAAHHVSSI (572 aa). 3 N-linked (GlcNAc...) asparagine glycosylation sites follow: Asn-253, Asn-276, and Asn-360. Ser-378 (charge relay system) is an active-site residue. Positions 520-559 are disordered; sequence NKNDEPPLPNPLHPKPPSTVRSSNMPHEQSPNASRSLSSL. Residues 525 to 536 show a composition bias toward pro residues; the sequence is PPLPNPLHPKPP. A compositionally biased stretch (polar residues) spans 538 to 559; that stretch reads TVRSSNMPHEQSPNASRSLSSL. N-linked (GlcNAc...) asparagine glycosylation occurs at Asn-551.

This sequence belongs to the AB hydrolase superfamily. Lipase family. Binds to both phosphatidylinositol (PI) and phosphatidylinositol 3,5-bisphosphate (PIP2).

It localises to the endosome. The protein localises to the multivesicular body membrane. Its subcellular location is the prevacuolar compartment membrane. The catalysed reaction is a triacylglycerol + H2O = a diacylglycerol + a fatty acid + H(+). Functionally, lipase which is essential for lysis of subvacuolar cytoplasm to vacuole targeted bodies and intravacuolar autophagic bodies. Involved in the lysis of intravacuolar multivesicular body (MVB) vesicles. The intravacuolar membrane disintegration by ATG15 is critical to life span extension. The protein is Putative lipase ATG15 (ATG15) of Debaryomyces hansenii (strain ATCC 36239 / CBS 767 / BCRC 21394 / JCM 1990 / NBRC 0083 / IGC 2968) (Yeast).